The chain runs to 348 residues: ATPase GET3 (348 aa).

26 to 33 (KGGVGKTT) contacts ATP. Asp57 is a catalytic residue. ATP is bound by residues Glu241 and Asn268. 2 residues coordinate Zn(2+): Cys280 and Cys283. Residue 310–312 (PLL) coordinates ATP.

Belongs to the arsA ATPase family. In terms of assembly, homodimer. Component of the Golgi to ER traffic (GET) complex, which is composed of GET1, GET2 and GET3. Within the complex, GET1 and GET2 form a heterotetramer which is stabilized by phosphatidylinositol binding and which binds to the GET3 homodimer. Interacts with the chloride channel protein GEF1.

The protein localises to the cytoplasm. The protein resides in the endoplasmic reticulum. It is found in the golgi apparatus. Functionally, ATPase required for the post-translational delivery of tail-anchored (TA) proteins to the endoplasmic reticulum. Recognizes and selectively binds the transmembrane domain of TA proteins in the cytosol. This complex then targets to the endoplasmic reticulum by membrane-bound receptors GET1 and GET2, where the tail-anchored protein is released for insertion. This process is regulated by ATP binding and hydrolysis. ATP binding drives the homodimer towards the closed dimer state, facilitating recognition of newly synthesized TA membrane proteins. ATP hydrolysis is required for insertion. Subsequently, the homodimer reverts towards the open dimer state, lowering its affinity for the GET1-GET2 receptor, and returning it to the cytosol to initiate a new round of targeting. Cooperates with the HDEL receptor ERD2 to mediate the ATP-dependent retrieval of resident ER proteins that contain a C-terminal H-D-E-L retention signal from the Golgi to the ER. Involved in low-level resistance to the oxyanions arsenite and arsenate, and in heat tolerance. This is ATPase GET3 from Debaryomyces hansenii (strain ATCC 36239 / CBS 767 / BCRC 21394 / JCM 1990 / NBRC 0083 / IGC 2968) (Yeast).